A 252-amino-acid chain; its full sequence is Pyridoxine 5'-phosphate synthase (252 aa).

3-amino-2-oxopropyl phosphate-binding residues include N8 and R19. The active-site Proton acceptor is the H44. Positions 46 and 51 each coordinate 1-deoxy-D-xylulose 5-phosphate. The active-site Proton acceptor is E75. T110 lines the 1-deoxy-D-xylulose 5-phosphate pocket. H201 serves as the catalytic Proton donor. 3-amino-2-oxopropyl phosphate-binding positions include D202 and 224–225 (GH).

This sequence belongs to the PNP synthase family. As to quaternary structure, homooctamer; tetramer of dimers.

It is found in the cytoplasm. The enzyme catalyses 3-amino-2-oxopropyl phosphate + 1-deoxy-D-xylulose 5-phosphate = pyridoxine 5'-phosphate + phosphate + 2 H2O + H(+). It functions in the pathway cofactor biosynthesis; pyridoxine 5'-phosphate biosynthesis; pyridoxine 5'-phosphate from D-erythrose 4-phosphate: step 5/5. Functionally, catalyzes the complicated ring closure reaction between the two acyclic compounds 1-deoxy-D-xylulose-5-phosphate (DXP) and 3-amino-2-oxopropyl phosphate (1-amino-acetone-3-phosphate or AAP) to form pyridoxine 5'-phosphate (PNP) and inorganic phosphate. The chain is Pyridoxine 5'-phosphate synthase from Albidiferax ferrireducens (strain ATCC BAA-621 / DSM 15236 / T118) (Rhodoferax ferrireducens).